A 307-amino-acid polypeptide reads, in one-letter code: Ribosomal protein L11 methyltransferase (307 aa).

S-adenosyl-L-methionine-binding residues include threonine 144, glycine 165, aspartate 187, and asparagine 235.

It belongs to the methyltransferase superfamily. PrmA family.

It localises to the cytoplasm. It catalyses the reaction L-lysyl-[protein] + 3 S-adenosyl-L-methionine = N(6),N(6),N(6)-trimethyl-L-lysyl-[protein] + 3 S-adenosyl-L-homocysteine + 3 H(+). Its function is as follows. Methylates ribosomal protein L11. The protein is Ribosomal protein L11 methyltransferase of Psychrobacter sp. (strain PRwf-1).